Consider the following 221-residue polypeptide: Leucyl/phenylalanyl-tRNA--protein transferase (221 aa).

The protein belongs to the L/F-transferase family.

It localises to the cytoplasm. It catalyses the reaction N-terminal L-lysyl-[protein] + L-leucyl-tRNA(Leu) = N-terminal L-leucyl-L-lysyl-[protein] + tRNA(Leu) + H(+). The enzyme catalyses N-terminal L-arginyl-[protein] + L-leucyl-tRNA(Leu) = N-terminal L-leucyl-L-arginyl-[protein] + tRNA(Leu) + H(+). The catalysed reaction is L-phenylalanyl-tRNA(Phe) + an N-terminal L-alpha-aminoacyl-[protein] = an N-terminal L-phenylalanyl-L-alpha-aminoacyl-[protein] + tRNA(Phe). Its function is as follows. Functions in the N-end rule pathway of protein degradation where it conjugates Leu, Phe and, less efficiently, Met from aminoacyl-tRNAs to the N-termini of proteins containing an N-terminal arginine or lysine. This Phenylobacterium zucineum (strain HLK1) protein is Leucyl/phenylalanyl-tRNA--protein transferase.